A 189-amino-acid chain; its full sequence is Interferon alpha-17 (189 aa).

Residues 1–23 (MALSFSLLMAVLVLSYKSICSLG) form the signal peptide. Disulfide bonds link C24/C122 and C52/C162.

It belongs to the alpha/beta interferon family.

Its subcellular location is the secreted. Its function is as follows. Produced by macrophages, IFN-alpha have antiviral activities. Interferon stimulates the production of two enzymes: a protein kinase and an oligoadenylate synthetase. The sequence is that of Interferon alpha-17 (IFNA17) from Homo sapiens (Human).